The primary structure comprises 688 residues: Glycine--tRNA ligase beta subunit (688 aa).

Belongs to the class-II aminoacyl-tRNA synthetase family. Tetramer of two alpha and two beta subunits.

It is found in the cytoplasm. The catalysed reaction is tRNA(Gly) + glycine + ATP = glycyl-tRNA(Gly) + AMP + diphosphate. The chain is Glycine--tRNA ligase beta subunit from Shewanella oneidensis (strain ATCC 700550 / JCM 31522 / CIP 106686 / LMG 19005 / NCIMB 14063 / MR-1).